A 208-amino-acid polypeptide reads, in one-letter code: ATP-dependent Clp protease proteolytic subunit 1 (208 aa).

Catalysis depends on serine 108, which acts as the Nucleophile. Histidine 133 is a catalytic residue.

The protein belongs to the peptidase S14 family. Fourteen ClpP subunits assemble into 2 heptameric rings which stack back to back to give a disk-like structure with a central cavity, resembling the structure of eukaryotic proteasomes.

The protein localises to the cytoplasm. The catalysed reaction is Hydrolysis of proteins to small peptides in the presence of ATP and magnesium. alpha-casein is the usual test substrate. In the absence of ATP, only oligopeptides shorter than five residues are hydrolyzed (such as succinyl-Leu-Tyr-|-NHMec, and Leu-Tyr-Leu-|-Tyr-Trp, in which cleavage of the -Tyr-|-Leu- and -Tyr-|-Trp bonds also occurs).. Cleaves peptides in various proteins in a process that requires ATP hydrolysis. Has a chymotrypsin-like activity. Plays a major role in the degradation of misfolded proteins. The polypeptide is ATP-dependent Clp protease proteolytic subunit 1 (Corynebacterium efficiens (strain DSM 44549 / YS-314 / AJ 12310 / JCM 11189 / NBRC 100395)).